The sequence spans 234 residues: MRLVQLSRHSIAFPSPEGALREPNGLLALGGDLSPARLLMAYQRGIFPWFSPGDPILWWSPDPRAVLWPESLHISRSMKRFHKRSPYRVTMNYAFGQVIEGCASDREEGTWITRGVVEAYHRLHELGHAHSIEVWREDELVAGMYGVAQGTLFCGESMFSRMENASKTALLVFCEEFIGHAGKLIDCQVLNDHTASLGACEIPRRDYLNYLNQMRLGRLPNNFWVPRCLFSPQE.

This sequence belongs to the L/F-transferase family.

It localises to the cytoplasm. The enzyme catalyses N-terminal L-lysyl-[protein] + L-leucyl-tRNA(Leu) = N-terminal L-leucyl-L-lysyl-[protein] + tRNA(Leu) + H(+). The catalysed reaction is N-terminal L-arginyl-[protein] + L-leucyl-tRNA(Leu) = N-terminal L-leucyl-L-arginyl-[protein] + tRNA(Leu) + H(+). It catalyses the reaction L-phenylalanyl-tRNA(Phe) + an N-terminal L-alpha-aminoacyl-[protein] = an N-terminal L-phenylalanyl-L-alpha-aminoacyl-[protein] + tRNA(Phe). Functions in the N-end rule pathway of protein degradation where it conjugates Leu, Phe and, less efficiently, Met from aminoacyl-tRNAs to the N-termini of proteins containing an N-terminal arginine or lysine. The protein is Leucyl/phenylalanyl-tRNA--protein transferase of Shigella flexneri serotype 5b (strain 8401).